The primary structure comprises 414 residues: MTTQRSPGLFRRLAHGSLVKQILVGLVLGILLAWISKPAAEAVGLLGTLFVGALKAVAPILVLMLVMASIANHQHGQKTNIRPILFLYLLGTFSAALAAVVFSFAFPSTLHLSSSAGDISPPSGIVEVMRGLVMSMVSNPIDALLKGNYIGILVWAIGLGFALRHGNETTKNLVNDMSNAVTFMVKLVIRFAPFGIFGLVSSTLATTGFSTLWGYAQLLVVLVGCMLLVALVVNPLLVWWKIRRNPFPLVLLCLRESGVYAFFTRSSAANIPVNMALCEKLNLDRDTYSVSIPLGATINMAGAAITITVLTLAAVNTLGIPVDLPTALLLSVVASLCACGASGVAGGSLLLIPLACNMFGISNDIAMQVVAVGFIIGVLQDSCETALNSSTDVLFTAAACQAEDDRLANSALRN.

At 2-15 the chain is on the cytoplasmic side; it reads TTQRSPGLFRRLAH. A helical membrane pass occupies residues 16–36; that stretch reads GSLVKQILVGLVLGILLAWIS. Residues 37–45 are Periplasmic-facing; it reads KPAAEAVGL. The helical transmembrane segment at 46–66 threads the bilayer; it reads LGTLFVGALKAVAPILVLMLV. At 67–83 the chain is on the cytoplasmic side; that stretch reads MASIANHQHGQKTNIRP. Residues 84 to 104 traverse the membrane as a helical segment; the sequence is ILFLYLLGTFSAALAAVVFSF. Residues 105–142 lie on the Periplasmic side of the membrane; that stretch reads AFPSTLHLSSSAGDISPPSGIVEVMRGLVMSMVSNPID. The helical transmembrane segment at 143–163 threads the bilayer; that stretch reads ALLKGNYIGILVWAIGLGFAL. Topologically, residues 164-179 are cytoplasmic; the sequence is RHGNETTKNLVNDMSN. The helical transmembrane segment at 180–200 threads the bilayer; it reads AVTFMVKLVIRFAPFGIFGLV. Residues 201–217 are Periplasmic-facing; it reads SSTLATTGFSTLWGYAQ. The chain crosses the membrane as a helical span at residues 218–238; that stretch reads LLVVLVGCMLLVALVVNPLLV. Residues 239-299 lie on the Cytoplasmic side of the membrane; that stretch reads WWKIRRNPFP…VSIPLGATIN (61 aa). Residues 300–320 traverse the membrane as a helical segment; sequence MAGAAITITVLTLAAVNTLGI. At 321 to 331 the chain is on the periplasmic side; the sequence is PVDLPTALLLS. Residues 332–352 form a helical membrane-spanning segment; the sequence is VVASLCACGASGVAGGSLLLI. Over 353 to 414 the chain is Cytoplasmic; sequence PLACNMFGIS…DRLANSALRN (62 aa).

It belongs to the dicarboxylate/amino acid:cation symporter (DAACS) (TC 2.A.23) family.

It is found in the cell inner membrane. It catalyses the reaction L-serine(in) + Na(+)(in) = L-serine(out) + Na(+)(out). It carries out the reaction L-threonine(in) + Na(+)(in) = L-threonine(out) + Na(+)(out). Functionally, involved in the import of serine and threonine into the cell, with the concomitant import of sodium (symport system). In Shigella flexneri, this protein is Serine/threonine transporter SstT.